A 261-amino-acid polypeptide reads, in one-letter code: Indole-3-glycerol phosphate synthase (261 aa).

Belongs to the TrpC family.

It catalyses the reaction 1-(2-carboxyphenylamino)-1-deoxy-D-ribulose 5-phosphate + H(+) = (1S,2R)-1-C-(indol-3-yl)glycerol 3-phosphate + CO2 + H2O. The protein operates within amino-acid biosynthesis; L-tryptophan biosynthesis; L-tryptophan from chorismate: step 4/5. The protein is Indole-3-glycerol phosphate synthase of Burkholderia pseudomallei (strain 668).